Here is a 216-residue protein sequence, read N- to C-terminus: Ras-related protein Rab-5C (216 aa).

GTP is bound by residues Ser30, Ala31, Gly33, Lys34, Ser35, Ser36, His47, Glu48, Thr53, and Gly79. Ser35 is a binding site for Mg(2+). 2 short sequence motifs (switch) span residues 45 to 57 (QFHE…IGAA) and 78 to 94 (AGQE…YRGA). A Mg(2+)-binding site is contributed by Thr53. Ser85 is subject to Phosphoserine. Positions 134, 135, 137, 165, and 166 each coordinate GTP. The disordered stretch occupies residues 185–216 (NEPQNAAGAPGRNRGVDLQENNPASRSQCCSN). Over residues 203 to 216 (QENNPASRSQCCSN) the composition is skewed to polar residues. Residues Cys213 and Cys214 are each lipidated (S-geranylgeranyl cysteine).

The protein belongs to the small GTPase superfamily. Rab family. Interacts with EEA1 and INCA1. Interacts with GDI1, GDI2, CHML and CHM; phosphorylation at Ser-85 disrupts this interaction. Mg(2+) serves as cofactor. In terms of processing, phosphorylation of Ser-85 in the switch II region by LRRK2 prevents the association of RAB regulatory proteins, including CHM, CHML and RAB GDP dissociation inhibitors GDI1 and GDI2.

The protein resides in the cell membrane. It localises to the early endosome membrane. It is found in the melanosome. The catalysed reaction is GTP + H2O = GDP + phosphate + H(+). With respect to regulation, regulated by guanine nucleotide exchange factors (GEFs) which promote the exchange of bound GDP for free GTP. Regulated by GTPase activating proteins (GAPs) which increase the GTP hydrolysis activity. Inhibited by GDP dissociation inhibitors (GDIs). The small GTPases Rab are key regulators of intracellular membrane trafficking, from the formation of transport vesicles to their fusion with membranes. Rabs cycle between an inactive GDP-bound form and an active GTP-bound form that is able to recruit to membranes different sets of downstream effectors directly responsible for vesicle formation, movement, tethering and fusion. This chain is Ras-related protein Rab-5C (RAB5C), found in Bos taurus (Bovine).